The primary structure comprises 422 residues: UPF0229 protein Spro_2732 (422 aa).

Residues 77 to 90 (PGNDHFVQNDRVER) are compositionally biased toward basic and acidic residues. A disordered region spans residues 77 to 109 (PGNDHFVQNDRVERPQGGGGGGSGQGNASQDGE). Gly residues predominate over residues 92-101 (QGGGGGGSGQ).

The protein belongs to the UPF0229 family.

The polypeptide is UPF0229 protein Spro_2732 (Serratia proteamaculans (strain 568)).